Reading from the N-terminus, the 157-residue chain is SsrA-binding protein (157 aa).

The protein belongs to the SmpB family.

The protein localises to the cytoplasm. Required for rescue of stalled ribosomes mediated by trans-translation. Binds to transfer-messenger RNA (tmRNA), required for stable association of tmRNA with ribosomes. tmRNA and SmpB together mimic tRNA shape, replacing the anticodon stem-loop with SmpB. tmRNA is encoded by the ssrA gene; the 2 termini fold to resemble tRNA(Ala) and it encodes a 'tag peptide', a short internal open reading frame. During trans-translation Ala-aminoacylated tmRNA acts like a tRNA, entering the A-site of stalled ribosomes, displacing the stalled mRNA. The ribosome then switches to translate the ORF on the tmRNA; the nascent peptide is terminated with the 'tag peptide' encoded by the tmRNA and targeted for degradation. The ribosome is freed to recommence translation, which seems to be the essential function of trans-translation. The chain is SsrA-binding protein from Levilactobacillus brevis (strain ATCC 367 / BCRC 12310 / CIP 105137 / JCM 1170 / LMG 11437 / NCIMB 947 / NCTC 947) (Lactobacillus brevis).